The primary structure comprises 106 residues: uncharacterized protein (106 aa).

This is an uncharacterized protein from Bacillus subtilis (strain 168).